The chain runs to 265 residues: Mlc titration factor A (265 aa).

His-111, His-148, His-152, and Glu-211 together coordinate Zn(2+).

It belongs to the MtfA family. Interacts with Mlc. Zn(2+) is required as a cofactor.

The protein localises to the cytoplasm. Involved in the modulation of the activity of the glucose-phosphotransferase system (glucose-PTS). Interacts with the transcriptional repressor Mlc, preventing its interaction with DNA and leading to the modulation of expression of genes regulated by Mlc, including ptsG, which encodes the PTS system glucose-specific EIICB component. In terms of biological role, shows zinc-dependent metallopeptidase activity. The protein is Mlc titration factor A of Salmonella gallinarum (strain 287/91 / NCTC 13346).